Here is a 527-residue protein sequence, read N- to C-terminus: RUS family member 1 (527 aa).

The N-linked (GlcNAc...) asparagine glycan is linked to Asn21. The helical transmembrane segment at 220–240 (SQETAVNLVGMLLSVIVSSFI) threads the bilayer. N-linked (GlcNAc...) asparagine glycosylation is present at Asn243. Residues 245–265 (SLIVTWLVFLFFTSLHLFCNY) form a helical membrane-spanning segment. N-linked (GlcNAc...) asparagine glycosylation occurs at Asn346. The interval 350 to 426 (TKNVNNNNNN…NNNNNNNNNK (77 aa)) is disordered. 2 N-linked (GlcNAc...) asparagine glycosylation sites follow: Asn467 and Asn497.

This sequence belongs to the RUS1 family.

It is found in the membrane. This is RUS family member 1 (rusf1) from Dictyostelium discoideum (Social amoeba).